A 184-amino-acid chain; its full sequence is Photosystem I assembly protein Ycf4 (184 aa).

2 consecutive transmembrane segments (helical) span residues 22–42 (FFWA…GTSS) and 57–77 (IPFF…LFIS).

It belongs to the Ycf4 family.

It is found in the plastid. The protein resides in the chloroplast thylakoid membrane. In terms of biological role, seems to be required for the assembly of the photosystem I complex. In Ceratophyllum demersum (Rigid hornwort), this protein is Photosystem I assembly protein Ycf4.